A 206-amino-acid chain; its full sequence is Guanylate kinase (206 aa).

Positions 6-184 (GNLFILSAPS…ALTDIETIVM (179 aa)) constitute a Guanylate kinase-like domain. 13 to 20 (APSGAGKS) contacts ATP.

Belongs to the guanylate kinase family.

The protein resides in the cytoplasm. The catalysed reaction is GMP + ATP = GDP + ADP. Its function is as follows. Essential for recycling GMP and indirectly, cGMP. In Pseudoalteromonas translucida (strain TAC 125), this protein is Guanylate kinase.